A 685-amino-acid polypeptide reads, in one-letter code: Iron(3+)-hydroxamate import system permease protein FhuB (685 aa).

A run of 18 helical transmembrane segments spans residues 35 to 55 (ALLL…NFSV), 87 to 107 (LAIS…FQQV), 120 to 140 (VATG…PGAL), 143 to 163 (QFAA…VAWG), 172 to 192 (ILAG…LVIF), 222 to 242 (QLLG…LMGL), 265 to 285 (AIVL…IGLF), 302 to 322 (LMLA…IILW), 328 to 348 (MEVS…LWLL), 373 to 393 (LAFA…ALSF), 416 to 436 (WPRI…GCII), 456 to 476 (AAFG…GWLL), 479 to 499 (GSLG…RGGF), 504 to 524 (MLLA…MLQA), 553 to 573 (AIVM…LTIL), 592 to 612 (IALL…IGPL), 632 to 652 (MPHM…ADWC), and 660 to 680 (YQIP…IYLL).

The protein belongs to the binding-protein-dependent transport system permease family. FecCD subfamily. The complex is composed of two ATP-binding proteins (FhuC), a transmembrane protein (FhuB) and a solute-binding protein (FhuD).

The protein resides in the cell inner membrane. Functionally, part of the ABC transporter complex FhuCDB involved in iron(3+)-hydroxamate import. Responsible for the translocation of the substrate across the membrane. Involved in ferrioxamine-mediated iron(III) utilization. The polypeptide is Iron(3+)-hydroxamate import system permease protein FhuB (fhuB) (Salmonella typhimurium (strain LT2 / SGSC1412 / ATCC 700720)).